The following is a 115-amino-acid chain: Photosystem II reaction center Psb28 protein (115 aa).

This sequence belongs to the Psb28 family. In terms of assembly, part of the photosystem II complex.

It is found in the plastid. The protein localises to the chloroplast thylakoid membrane. This is Photosystem II reaction center Psb28 protein from Pyropia yezoensis (Susabi-nori).